A 575-amino-acid chain; its full sequence is Eukaryotic translation initiation factor 3 subunit D (575 aa).

Disordered stretches follow at residues 36 to 66 (PYSK…YGNR) and 103 to 177 (STRT…DASV). The segment covering 39–59 (KGDKLGRMADWTEGKDRERGG) has biased composition (basic and acidic residues). Over residues 109-144 (FGRGGGTVFGRGRGQRGGQAQRGGRGTFQRVGGRGG) the composition is skewed to gly residues. The segment covering 163 to 174 (GWRDDKPQRNRD) has biased composition (basic and acidic residues). The RNA gate stretch occupies residues 302–316 (NLDMVTVNENAADAP).

This sequence belongs to the eIF-3 subunit D family. As to quaternary structure, component of the eukaryotic translation initiation factor 3 (eIF-3) complex.

Its subcellular location is the cytoplasm. In terms of biological role, mRNA cap-binding component of the eukaryotic translation initiation factor 3 (eIF-3) complex, which is involved in protein synthesis of a specialized repertoire of mRNAs and, together with other initiation factors, stimulates binding of mRNA and methionyl-tRNAi to the 40S ribosome. The eIF-3 complex specifically targets and initiates translation of a subset of mRNAs involved in cell proliferation. In the eIF-3 complex, eif3d specifically recognizes and binds the 7-methylguanosine cap of a subset of mRNAs. The protein is Eukaryotic translation initiation factor 3 subunit D of Phaeosphaeria nodorum (strain SN15 / ATCC MYA-4574 / FGSC 10173) (Glume blotch fungus).